A 1809-amino-acid polypeptide reads, in one-letter code: MDWGWGSRCCRPGRRDLLCVLALLAGCLLPVCRTRVYTNHWAVKIAGGFAEADRIASKYGFINVGQIGALKDYYHFYHSRTIKRSVLSSRGTHSFISMEPKVEWIQQQVVKKRTKRDYDLSRAQSTYFNDPKWPSMWYMHCSDNTHPCQSDMNIEGAWKRGYTGKNIVVTILDDGIERTHPDLMQNYDALASCDVNGNDLDPMPRYDASNENKHGTRCAGEVAATANNSHCTVGIAFNAKIGGVRMLDGDVTDMVEAKSVSYNPQHVHIYSASWGPDDDGKTVDGPAPLTRQAFENGVRMGRRGLGSVFVWASGNGGRSKDHCSCDGYTNSIYTISISSTAESGKKPWYLEECSSTLATTYSSGESYDKKIITTDLRQRCTDNHTGTSASAPMAAGIIALALEANPFLTWRDVQHVIVRTSRAGHLNANDWKTNAAGFKVSHLYGFGLMDAEAMVMEAEKWTTVPQQHVCVESTDRQIKTIRPNSAVRSIYKASGCSDNPNHHVNYLEHVVVRITITHPRRGDLAIYLTSPSGTRSQLLANRLFDHSMEGFKNWEFMTIHCWGERAAGDWVLEVYDTPSQLRNFKTPGKLKEWSLVLYGTSVQPYSPTNEFPKVERFRYSRVEDPTDDYGAEDYAGPCDPECSEVGCDGPGPDHCTDCLHYHYKLKNNTRICVSSCPPGHFHADKKRCRKCAPNCESCFGSHADQCLSCKYGYFLNEETSSCVAQCPEGSYQDIKKNICGKCSENCKTCTGFHNCTECKGGLSLQGSRCSVTCEDGQFFSGHDCQPCHRFCATCAGAGADGCINCTEGYVMEEGRCVQSCSVSYYLDHSLEGGYKSCKRCDNSCLTCNGPGFKNCSSCPSGYLLDLGMCQMGAICKDGEYIDEQGHCQICDASCAKCWGPTQDDCISCPITRVFDDGRCVMNCPSWKFELKKQCHPCHHTCQGCQGSGPSNCTSCKAGEFQDSEYGECMPCEEGCVGCTVDDPGACTSCATGYYMFERHCYKACPEKTFGEKWECKACGTNCGSCDQHECYWCEEGFFLSSGSCVQDCDPGFYGDQELGECKPCHRACETCTGLGYNQCSSCPEGLQLWHGTCIWPTWPHVEGKVWNEAVPTEKPSLVRSLPQDRRKWKVQIKRDATRQYQPCHSSCKTCNGSLCTSCPAGTYLWLQACVPSCPQGTWLSVRSSSCEKCAEGCASCSGDDLCQRCLSQPSNTLLLHEGRCYHSCPEGFYAKDGVCEHCSSPCKTCKGNATSCHSCEGDFVLDHGVCWETCPEKHVAVEGVCKHCPERCQDCIHEKTCKECMPDFFLYNDMCHHSCPKNFYPDMRQCVPCHKNCLGCNGPKEDDCKACADTSKVLHNGLCLDECPKGTYKDEVNDECRDCPESCLICSSAWTCLTCREGFTVVQDVCTAPKECAAIEYWDVGSHRCQPCHRKCSRCSGPSENQCYTCPRETFLLNTTCVKECPEGYHTDKDSHQCVPCHSSCRTCEGPHSMQCLSCRPGWFQLGKECLLQCRDGYYGESTSGRCEKCDKSCKTCRGPQPTDCQSCDTFFFLLRSKGQCHLACPEHYYADQHAQTCERCHPTCDKCSGKEAWNCLSCVWSYHLLKGICTPECIVGEYRDGKGENFNCKKCHESCMECKGPGSKNCTGCSAGLLLQMDDSRCLRCCNASHPHRSQDCCDCQSSTDECILPASDDTVFHEHTKTALLVTSGAMLLLLLGAAVVVWRKSRSQPVAKGRYEKLAEPTVSYSSYRSSYLDEDQVIEYRDRDYDEDDEDDIVYMGQDGTVYRKFKYGLLDEAEDDELEYDDESYSYQ.

The signal sequence occupies residues 1–34 (MDWGWGSRCCRPGRRDLLCVLALLAGCLLPVCRT). Residues 35–116 (RVYTNHWAVK…QQVVKKRTKR (82 aa)) constitute a propeptide that is removed on maturation. At 117–1700 (DYDLSRAQST…DTVFHEHTKT (1584 aa)) the chain is on the extracellular side. In terms of domain architecture, Peptidase S8 spans 136-455 (MWYMHCSDNT…FGLMDAEAMV (320 aa)). Residues Asp173 and His214 each act as charge relay system in the active site. N-linked (GlcNAc...) asparagine glycans are attached at residues Asn227 and Asn383. The Charge relay system role is filled by Ser388. Residues 463–603 (TVPQQHVCVE…SLVLYGTSVQ (141 aa)) form the P/Homo B domain. The short motif at 521 to 523 (RGD) is the Cell attachment site element. 21 FU repeats span residues 632–682 (EDYA…GHFH), 685–732 (KKRC…GSYQ), 736–779 (KNIC…GQFF), 781–826 (GHDC…SYYL), 834–881 (YKSC…GEYI), 884–929 (QGHC…WKFE), 931–964 (KKQC…QDSE), 965–1010 (YGEC…KTFG), 1012–1054 (KWEC…GFYG), 1058–1099 (LGEC…PTWP), 1137–1179 (TRQY…GTWL), 1183–1230 (SSSC…GFYA), 1232–1276 (DGVC…KHVA), 1278–1321 (EGVC…NFYP), 1323–1369 (MRQC…GTYK), 1373–1418 (NDEC…IEYW), 1422–1467 (SHRC…GYHT), 1471–1516 (SHQC…GYYG), 1520–1567 (SGRC…HYYA), 1571–1616 (AQTC…GEYR), and 1622–1669 (NFNC…SHPH). Residues 638-1685 (CDPECSEVGC…DCQSSTDECI (1048 aa)) are CRM (Cys-rich motif). Asn667 is a glycosylation site (N-linked (GlcNAc...) asparagine). Asn754, Asn804, and Asn854 each carry an N-linked (GlcNAc...) asparagine glycan. 2 N-linked (GlcNAc...) asparagine glycosylation sites follow: Asn1642 and Asn1664. The helical transmembrane segment at 1701-1721 (ALLVTSGAMLLLLLGAAVVVW) threads the bilayer. At 1722 to 1809 (RKSRSQPVAK…EYDDESYSYQ (88 aa)) the chain is on the cytoplasmic side. 2 AC regions span residues 1757-1776 (VIEY…IVYM) and 1788-1809 (YGLL…YSYQ).

Belongs to the peptidase S8 family. In terms of tissue distribution, expressed in the intestine, brain, adrenal gland, anterior pituitary, thyroid, ovaries, testis and lung. Highest levels are found in the gut, duodenum, jejunum and ileum. Expression is higher in female than in male reproductive organs.

It is found in the secreted. The protein resides in the endomembrane system. Functionally, serine endoprotease that processes various proproteins by cleavage at paired basic amino acids, recognizing the RXXX[KR]R consensus motif. Likely functions in the constitutive and regulated secretory pathways. Plays an essential role in pregnancy establishment by proteolytic activation of a number of important factors such as BMP2, CALD1 and alpha-integrins. May be responsible for the maturation of gastrointestinal peptides. May be involved in the cellular proliferation of adrenal cortex via the activation of growth factors. The sequence is that of Proprotein convertase subtilisin/kexin type 5 (Pcsk5) from Rattus norvegicus (Rat).